Consider the following 517-residue polypeptide: Ribonuclease Y (517 aa).

A helical membrane pass occupies residues 1–21; it reads MIESLIALIAAIVGLGIGYLV. The KH domain occupies 207–273; sequence LINVINIKND…TKVIELLVED (67 aa). In terms of domain architecture, HD spans 333 to 426; the sequence is ALAHSLEVAH…VCAADTLSAA (94 aa).

This sequence belongs to the RNase Y family.

Its subcellular location is the cell membrane. Functionally, endoribonuclease that initiates mRNA decay. In Campylobacter jejuni subsp. jejuni serotype O:6 (strain 81116 / NCTC 11828), this protein is Ribonuclease Y.